Consider the following 436-residue polypeptide: Envelope glycoprotein (436 aa).

Residue methionine 1 is a signal peptide. The Extracellular portion of the chain corresponds to 2–436; sequence ANPSPHQIYN…GGLTVGGIAA (435 aa). 2 N-linked (GlcNAc...) asparagine; by host glycosylation sites follow: asparagine 11 and asparagine 26. Disulfide bonds link cysteine 95–cysteine 117 and cysteine 109–cysteine 122. Residues 203–255 form a disordered region; it reads PPQAMGPNLVLPDQKPPSRQSQTGSKVATQRPQTNESAPRSVGPTTMGPKRIG. Residues 219–240 are compositionally biased toward polar residues; the sequence is PSRQSQTGSKVATQRPQTNESA. N-linked (GlcNAc...) asparagine; by host glycosylation is found at asparagine 237, asparagine 272, and asparagine 277. The CXXC signature appears at 282-285; the sequence is CWLC. Residues asparagine 304, asparagine 344, asparagine 360, and asparagine 380 are each glycosylated (N-linked (GlcNAc...) asparagine; by host).

In terms of assembly, the mature envelope protein (Env) consists of a trimer of SU-TM heterodimers attached by a labile interchain disulfide bond. Specific enzymatic cleavages in vivo yield mature proteins. Envelope glycoproteins are synthesized as an inactive precursor that is N-glycosylated and processed likely by host cell furin or by a furin-like protease in the Golgi to yield the mature SU and TM proteins. The cleavage site between SU and TM requires the minimal sequence [KR]-X-[KR]-R.

Its subcellular location is the virion membrane. The protein resides in the host cell membrane. Its function is as follows. The surface protein (SU) attaches the virus to the host cell by binding to its receptor. This interaction triggers the refolding of the transmembrane protein (TM) and is thought to activate its fusogenic potential by unmasking its fusion peptide. Fusion occurs at the host cell plasma membrane. In terms of biological role, the transmembrane protein (TM) acts as a class I viral fusion protein. Under the current model, the protein has at least 3 conformational states: pre-fusion native state, pre-hairpin intermediate state, and post-fusion hairpin state. During viral and target cell membrane fusion, the coiled coil regions (heptad repeats) assume a trimer-of-hairpins structure, positioning the fusion peptide in close proximity to the C-terminal region of the ectodomain. The formation of this structure appears to drive apposition and subsequent fusion of viral and target cell membranes. Membranes fusion leads to delivery of the nucleocapsid into the cytoplasm. The sequence is that of Envelope glycoprotein from Feline leukemia virus (strain C/FS246).